A 163-amino-acid chain; its full sequence is MLGISKKIETASQVDDQLVLPFDRRQKSRLRVELASGTEAALLLERGTVLRGGDLLQAEDGRVVQVVAADEPVLRVTAATPRELARAAYHLGNRHVPLEVGDGWLRLEQDHVLQEMLLGLGVQVEGQMAPFEPEAGAYGGGHRHHHDDDAPSIRQPARLRIHE.

A disordered region spans residues 134-163 (EAGAYGGGHRHHHDDDAPSIRQPARLRIHE).

Belongs to the UreE family.

Its subcellular location is the cytoplasm. Involved in urease metallocenter assembly. Binds nickel. Probably functions as a nickel donor during metallocenter assembly. This is Urease accessory protein UreE from Methylobacillus flagellatus (strain ATCC 51484 / DSM 6875 / VKM B-1610 / KT).